Here is a 37-residue protein sequence, read N- to C-terminus: Large ribosomal subunit protein bL36c (37 aa).

Belongs to the bacterial ribosomal protein bL36 family.

It localises to the plastid. The protein resides in the chloroplast. The protein is Large ribosomal subunit protein bL36c of Pleurastrum terricola (Filamentous green alga).